The primary structure comprises 302 residues: MSPAAELSPTPFGRLLTAMVTPFDAEGRVDFALAGRLARHLVEEGSEGLVVCGTTGESPTLSWQEQVKMLEVVRQAVGPGVKVLAGTGSNSTGEAVKATREAAASGADGALVVVPYYNKPPQEGLEAHFRAIANAAPELPLMLYNVPGRTGTSLAPATAAQLMNCANVVSFKAASGSIEEVTELRLACGPRLAVYSGDDGLLLPMLSAGAVGVVSVASHVVGRRLRHMIDAYLSGQNAVALGQHEQLTPLFQALFATSNPIPVKAALELSGWPVGAPRLPLLPLNSAMRDSLADLLTALRQT.

A pyruvate-binding site is contributed by T55. Catalysis depends on Y144, which acts as the Proton donor/acceptor. K172 functions as the Schiff-base intermediate with substrate in the catalytic mechanism. V214 lines the pyruvate pocket.

This sequence belongs to the DapA family. Homotetramer; dimer of dimers.

Its subcellular location is the cytoplasm. The enzyme catalyses L-aspartate 4-semialdehyde + pyruvate = (2S,4S)-4-hydroxy-2,3,4,5-tetrahydrodipicolinate + H2O + H(+). Its pathway is amino-acid biosynthesis; L-lysine biosynthesis via DAP pathway; (S)-tetrahydrodipicolinate from L-aspartate: step 3/4. Its function is as follows. Catalyzes the condensation of (S)-aspartate-beta-semialdehyde [(S)-ASA] and pyruvate to 4-hydroxy-tetrahydrodipicolinate (HTPA). This is 4-hydroxy-tetrahydrodipicolinate synthase from Synechococcus sp. (strain CC9311).